A 345-amino-acid chain; its full sequence is tRNA-dihydrouridine(20/20a) synthase (345 aa).

FMN is bound by residues 26 to 28 and Gln78; that span reads PML. The Proton donor role is filled by Cys108. FMN contacts are provided by residues Lys147, His180, 220–222, and 242–243; these read NGG and GR.

Belongs to the Dus family. DusA subfamily. Requires FMN as cofactor.

It carries out the reaction 5,6-dihydrouridine(20) in tRNA + NADP(+) = uridine(20) in tRNA + NADPH + H(+). It catalyses the reaction 5,6-dihydrouridine(20) in tRNA + NAD(+) = uridine(20) in tRNA + NADH + H(+). The catalysed reaction is 5,6-dihydrouridine(20a) in tRNA + NADP(+) = uridine(20a) in tRNA + NADPH + H(+). The enzyme catalyses 5,6-dihydrouridine(20a) in tRNA + NAD(+) = uridine(20a) in tRNA + NADH + H(+). Catalyzes the synthesis of 5,6-dihydrouridine (D), a modified base found in the D-loop of most tRNAs, via the reduction of the C5-C6 double bond in target uridines. Specifically modifies U20 and U20a in tRNAs. The sequence is that of tRNA-dihydrouridine(20/20a) synthase from Yersinia pestis.